The sequence spans 177 residues: Cyclic pyranopterin monophosphate synthase (177 aa).

Substrate is bound by residues 89-91 and 125-126; these read LCH and ME. D140 is a catalytic residue.

The protein belongs to the MoaC family. As to quaternary structure, homohexamer; trimer of dimers.

The catalysed reaction is (8S)-3',8-cyclo-7,8-dihydroguanosine 5'-triphosphate = cyclic pyranopterin phosphate + diphosphate. The protein operates within cofactor biosynthesis; molybdopterin biosynthesis. Functionally, catalyzes the conversion of (8S)-3',8-cyclo-7,8-dihydroguanosine 5'-triphosphate to cyclic pyranopterin monophosphate (cPMP). This is Cyclic pyranopterin monophosphate synthase from Streptomyces griseus subsp. griseus (strain JCM 4626 / CBS 651.72 / NBRC 13350 / KCC S-0626 / ISP 5235).